A 517-amino-acid polypeptide reads, in one-letter code: Crotonobetaine/carnitine--CoA ligase (517 aa).

The protein belongs to the ATP-dependent AMP-binding enzyme family.

The enzyme catalyses 4-(trimethylamino)butanoate + ATP + CoA = 4-(trimethylamino)butanoyl-CoA + AMP + diphosphate. It catalyses the reaction crotonobetaine + ATP + CoA = crotonobetainyl-CoA + AMP + diphosphate. The catalysed reaction is (R)-carnitine + ATP + CoA = (R)-carnitinyl-CoA + AMP + diphosphate. It functions in the pathway amine and polyamine metabolism; carnitine metabolism. Catalyzes the transfer of CoA to carnitine, generating the initial carnitinyl-CoA needed for the CaiB reaction cycle. Also has activity toward crotonobetaine and gamma-butyrobetaine. This chain is Crotonobetaine/carnitine--CoA ligase, found in Escherichia coli (strain SE11).